A 474-amino-acid chain; its full sequence is ABHD16B (474 aa).

The region spanning 175 to 293 (VICCEGNAGF…MPQSWKGLVV (119 aa)) is the AB hydrolase-1 domain. Residues Ser248, Asp323, and His423 each act as charge relay system in the active site.

This sequence belongs to the AB hydrolase superfamily. ABHD16 family.

The catalysed reaction is a 1,2-diacyl-sn-glycero-3-phospho-L-serine + H2O = a 2-acyl-sn-glycero-3-phospho-L-serine + a fatty acid + H(+). The enzyme catalyses a 1-acylglycerol + H2O = glycerol + a fatty acid + H(+). It catalyses the reaction 1-(9Z-octadecenoyl)-glycerol + H2O = glycerol + (9Z)-octadecenoate + H(+). Functionally, hydrolyzes the sn-1 position of glycerophospholipids with high specificity towards phosphatidylserine (PS), PS-PLA1 enzyme. Also hydrolyzes the acyl chain of glycerolipids with a preference for the monoacylglycerol (MAG) 1-acylglycerol, MAG lipase. Plays a regulatory role in cellular lipid homeostasis by modulating genes involved in neutral lipid degradation and in phospholipid synthesis and composition. This is ABHD16B from Rattus norvegicus (Rat).